The primary structure comprises 240 residues: Citrate synthase-lysine N-methyltransferase CSKMT, mitochondrial (240 aa).

A mitochondrion-targeting transit peptide spans 1–28 (MAALRRMLHLPSLMMGTCRPFAGSLADS).

Belongs to the methyltransferase superfamily.

It is found in the mitochondrion. It carries out the reaction L-lysyl-[citrate synthase] + S-adenosyl-L-methionine = N(6)-methyl-L-lysyl-[citrate synthase] + S-adenosyl-L-homocysteine + H(+). The catalysed reaction is N(6)-methyl-L-lysyl-[citrate synthase] + S-adenosyl-L-methionine = N(6),N(6)-dimethyl-L-lysyl-[citrate synthase] + S-adenosyl-L-homocysteine + H(+). It catalyses the reaction N(6),N(6)-dimethyl-L-lysyl-[citrate synthase] + S-adenosyl-L-methionine = N(6),N(6),N(6)-trimethyl-L-lysyl-[citrate synthase] + S-adenosyl-L-homocysteine + H(+). Citrate synthase-lysine methyltransferase activity is inhibited by S-adenosylhomocysteine (AdoHcy) and oxaloacetate (OAA). In terms of biological role, protein-lysine methyltransferase that selectively trimethylates citrate synthase (CS) in mitochondria. Seems to conduct trimethylation in a highly distributive manner rather than in a processive manner, and thus introduces a single methyl group per binding event. The polypeptide is Citrate synthase-lysine N-methyltransferase CSKMT, mitochondrial (Homo sapiens (Human)).